The sequence spans 114 residues: Mobility group protein 1A (114 aa).

Residues 5–71 (PKRPLSAYML…EYEKAMKEFE (67 aa)) constitute a DNA-binding region (HMG box). Residues 69–114 (EFERNGGDKSSGASTKKRGKAAEKKKPAKKSKKKDSEDDEEEDESD) are disordered. The segment covering 105 to 114 (EDDEEEDESD) has biased composition (acidic residues).

It belongs to the HMGB family.

It is found in the nucleus. Its subcellular location is the chromosome. Functionally, found in condensed chromomeres. Binds preferentially to AT-rich DNA. The protein is Mobility group protein 1A (HMG1A) of Chironomus tentans (Midge).